Reading from the N-terminus, the 477-residue chain is Ketoisovalerate oxidoreductase subunit VorA (477 aa).

As to quaternary structure, heterotrimer of the VorA, VorB and VorC subunits.

It catalyses the reaction 3-methyl-2-oxobutanoate + 2 oxidized [2Fe-2S]-[ferredoxin] + CoA = 2-methylpropanoyl-CoA + 2 reduced [2Fe-2S]-[ferredoxin] + CO2 + H(+). The protein is Ketoisovalerate oxidoreductase subunit VorA (vorA) of Methanothermobacter thermautotrophicus (strain ATCC 29096 / DSM 1053 / JCM 10044 / NBRC 100330 / Delta H) (Methanobacterium thermoautotrophicum).